Reading from the N-terminus, the 416-residue chain is Transcription factor PIL1 (416 aa).

3 disordered regions span residues 1–24, 89–113, and 197–231; these read MEAKPLASSSSEPNMISPSSNIKP, VSQSKPQQDKETNEQMNNNKKKLKS, and ESTYLSNNSDDESDDAKTQVHARTRKPVTKRKRST. Positions 8–22 are enriched in low complexity; that stretch reads SSSSEPNMISPSSNI. The stretch at 95–124 forms a coiled coil; it reads QQDKETNEQMNNNKKKLKSSKIEFERNVSK. Residues 216–229 show a composition bias toward basic residues; the sequence is VHARTRKPVTKRKR. Residues 229 to 278 enclose the bHLH domain; it reads RSTEVHKLYERKRRDEFNKKMRALQDLLPNCYKDDKASLLDEAIKYMRTL.

Homodimer. Interacts with APRR1/TOC1. Associates to PTAC12/HMR/PAP5 which acts as a transcriptional coactivator. In terms of tissue distribution, mainly expressed in stems, fruits and flowers and, to a lower extent, in leaves, seedlings and roots. Accumulates in etiolated seedlings.

Its subcellular location is the nucleus. Its function is as follows. Transcription factor. Involved in responses to transient and long-term shade. Required for the light-mediated inhibition of hypocotyl elongation. Necessary for rapid light-induced expression of the photomorphogenesis- and circadian-related gene APRR9. Seems to play a role in multiple PHYB responses, such as flowering transition and petiole elongation. In Arabidopsis thaliana (Mouse-ear cress), this protein is Transcription factor PIL1.